Consider the following 157-residue polypeptide: Crossover junction endodeoxyribonuclease RuvC (157 aa).

Catalysis depends on residues aspartate 7, glutamate 67, and aspartate 140. 3 residues coordinate Mg(2+): aspartate 7, glutamate 67, and aspartate 140.

Belongs to the RuvC family. In terms of assembly, homodimer which binds Holliday junction (HJ) DNA. The HJ becomes 2-fold symmetrical on binding to RuvC with unstacked arms; it has a different conformation from HJ DNA in complex with RuvA. In the full resolvosome a probable DNA-RuvA(4)-RuvB(12)-RuvC(2) complex forms which resolves the HJ. Mg(2+) is required as a cofactor.

The protein localises to the cytoplasm. The catalysed reaction is Endonucleolytic cleavage at a junction such as a reciprocal single-stranded crossover between two homologous DNA duplexes (Holliday junction).. Its function is as follows. The RuvA-RuvB-RuvC complex processes Holliday junction (HJ) DNA during genetic recombination and DNA repair. Endonuclease that resolves HJ intermediates. Cleaves cruciform DNA by making single-stranded nicks across the HJ at symmetrical positions within the homologous arms, yielding a 5'-phosphate and a 3'-hydroxyl group; requires a central core of homology in the junction. The consensus cleavage sequence is 5'-(A/T)TT(C/G)-3'. Cleavage occurs on the 3'-side of the TT dinucleotide at the point of strand exchange. HJ branch migration catalyzed by RuvA-RuvB allows RuvC to scan DNA until it finds its consensus sequence, where it cleaves and resolves the cruciform DNA. The polypeptide is Crossover junction endodeoxyribonuclease RuvC (Rickettsia typhi (strain ATCC VR-144 / Wilmington)).